Reading from the N-terminus, the 179-residue chain is Inner membrane-spanning protein YciB (179 aa).

Transmembrane regions (helical) follow at residues 3 to 23 (FLFD…FGIY), 49 to 69 (PMQW…ILLH), 76 to 96 (WKPT…VIGW), 121 to 141 (VAWA…AYQF), and 149 to 169 (FKLF…SIWL).

It belongs to the YciB family.

The protein resides in the cell inner membrane. Functionally, plays a role in cell envelope biogenesis, maintenance of cell envelope integrity and membrane homeostasis. The chain is Inner membrane-spanning protein YciB from Cupriavidus metallidurans (strain ATCC 43123 / DSM 2839 / NBRC 102507 / CH34) (Ralstonia metallidurans).